Consider the following 226-residue polypeptide: 7-cyano-7-deazaguanine synthase (226 aa).

7 to 17 lines the ATP pocket; that stretch reads ISGGMDSLVTT. Zn(2+)-binding residues include cysteine 187, cysteine 195, cysteine 198, and cysteine 201.

It belongs to the QueC family. Zn(2+) serves as cofactor.

It catalyses the reaction 7-carboxy-7-deazaguanine + NH4(+) + ATP = 7-cyano-7-deazaguanine + ADP + phosphate + H2O + H(+). Its pathway is purine metabolism; 7-cyano-7-deazaguanine biosynthesis. Catalyzes the ATP-dependent conversion of 7-carboxy-7-deazaguanine (CDG) to 7-cyano-7-deazaguanine (preQ(0)). This is 7-cyano-7-deazaguanine synthase from Chlorobium limicola (strain DSM 245 / NBRC 103803 / 6330).